We begin with the raw amino-acid sequence, 416 residues long: Lysosome-associated membrane glycoprotein 3 (416 aa).

The N-terminal stretch at M1–A27 is a signal peptide. At K28–T381 the chain is on the lumenal side. 7 N-linked (GlcNAc...) asparagine glycosylation sites follow: N112, N158, N164, N200, N232, N266, and N291. Disordered regions lie at residues P136–T167 and S179–Q219. The span at H143 to T160 shows a compositional bias: low complexity. Over residues P188–A208 the composition is skewed to low complexity. Residues C237 and C274 are joined by a disulfide bond. A disulfide bridge links C339 with C376. The helical transmembrane segment at I382–Y402 threads the bilayer. Residues K403–I416 lie on the Cytoplasmic side of the membrane.

The protein belongs to the LAMP family. As to quaternary structure, monomer. Interacts with FURIN. (Microbial infection) Interacts with mumps virus protein F; this interaction promotes protein F cleavage by FURIN. As to expression, detected in tonsil interdigitating dendritic cells, in spleen, lymph node, Peyer's patches in the small instestine, in thymus medulla and in B-cells (at protein level). Expressed in lymphoid organs and dendritic cells. Expressed in lung. Up-regulated in carcinomas of the esophagus, colon, rectum, ureter, stomach, breast, fallopian tube, thyroid and parotid tissues.

The protein resides in the cell surface. The protein localises to the lysosome membrane. Its subcellular location is the cytoplasmic vesicle membrane. It is found in the early endosome membrane. In terms of biological role, lysosomal membrane glycoprotein which plays a role in the unfolded protein response (UPR) that contributes to protein degradation and cell survival during proteasomal dysfunction. Plays a role in the process of fusion of the lysosome with the autophagosome, thereby modulating the autophagic process. Promotes hepatocellular lipogenesis through activation of the PI3K/Akt pathway. May also play a role in dendritic cell function and in adaptive immunity. Its function is as follows. (Microbial infection) Plays a positive role in post-entry steps of influenza A virus replication, either virus uncoating, cytosolic transport, or nuclear import of viral components, and promotes nuclear accumulation of influenza nucleoprotein/NP at early stages of viral infection. (Microbial infection) Supports the FURIN-mediated cleavage of mumps virus fusion protein F by interacting with both FURIN and the unprocessed form but not the processed form of the viral protein F. Functionally, (Microbial infection) Promotes the intracellular proliferation of Salmonella typhimuium. This chain is Lysosome-associated membrane glycoprotein 3 (LAMP3), found in Homo sapiens (Human).